We begin with the raw amino-acid sequence, 335 residues long: Nucleoid-associated protein PP_0973 (335 aa).

It belongs to the YejK family.

It is found in the cytoplasm. It localises to the nucleoid. This is Nucleoid-associated protein PP_0973 from Pseudomonas putida (strain ATCC 47054 / DSM 6125 / CFBP 8728 / NCIMB 11950 / KT2440).